Consider the following 320-residue polypeptide: Porphobilinogen deaminase (320 aa).

Position 248 is an S-(dipyrrolylmethanemethyl)cysteine (Cys248).

Belongs to the HMBS family. Monomer. Dipyrromethane serves as cofactor.

The enzyme catalyses 4 porphobilinogen + H2O = hydroxymethylbilane + 4 NH4(+). Its pathway is porphyrin-containing compound metabolism; protoporphyrin-IX biosynthesis; coproporphyrinogen-III from 5-aminolevulinate: step 2/4. The protein operates within porphyrin-containing compound metabolism; chlorophyll biosynthesis. Its function is as follows. Tetrapolymerization of the monopyrrole PBG into the hydroxymethylbilane pre-uroporphyrinogen in several discrete steps. The polypeptide is Porphobilinogen deaminase (Synechococcus elongatus (strain ATCC 33912 / PCC 7942 / FACHB-805) (Anacystis nidulans R2)).